The following is a 691-amino-acid chain: Vacuolar protein sorting-associated protein 33 (691 aa).

Serine 626 is modified (phosphoserine).

It belongs to the STXBP/unc-18/SEC1 family. As to quaternary structure, component of the HOPS complex which is composed of PEP5, VPS16, PEP3, VPS33, VPS39 and VPS41. HOPS associates with phosphoinositides and the PX domain of VAM7. Interacts with IVY1 and VAM7.

It localises to the vacuole. Its function is as follows. Essential for vacuolar biogenesis, maturation and function. Involved in the sorting of vacuolar proteins from the Golgi apparatus and their targeting to the vacuole. Acts as a component of the HOPS complex that acts during the docking stage of vacuole fusion. HOPS is an effector for the vacuolar Rab GTPase YPT7 and is required for vacuolar SNARE complex assembly. It remains bound to SNARE complexes after vacuole fusion. The chain is Vacuolar protein sorting-associated protein 33 (VPS33) from Saccharomyces cerevisiae (strain ATCC 204508 / S288c) (Baker's yeast).